Here is a 347-residue protein sequence, read N- to C-terminus: Lipoyl synthase (347 aa).

Positions 55, 60, 66, 81, 85, 88, and 292 each coordinate [4Fe-4S] cluster. Residues 67 to 281 enclose the Radical SAM core domain; sequence WEDREASFLI…SEAAYDMGFP (215 aa).

Belongs to the radical SAM superfamily. Lipoyl synthase family. It depends on [4Fe-4S] cluster as a cofactor.

Its subcellular location is the cytoplasm. The enzyme catalyses [[Fe-S] cluster scaffold protein carrying a second [4Fe-4S](2+) cluster] + N(6)-octanoyl-L-lysyl-[protein] + 2 oxidized [2Fe-2S]-[ferredoxin] + 2 S-adenosyl-L-methionine + 4 H(+) = [[Fe-S] cluster scaffold protein] + N(6)-[(R)-dihydrolipoyl]-L-lysyl-[protein] + 4 Fe(3+) + 2 hydrogen sulfide + 2 5'-deoxyadenosine + 2 L-methionine + 2 reduced [2Fe-2S]-[ferredoxin]. The protein operates within protein modification; protein lipoylation via endogenous pathway; protein N(6)-(lipoyl)lysine from octanoyl-[acyl-carrier-protein]: step 2/2. Its function is as follows. Catalyzes the radical-mediated insertion of two sulfur atoms into the C-6 and C-8 positions of the octanoyl moiety bound to the lipoyl domains of lipoate-dependent enzymes, thereby converting the octanoylated domains into lipoylated derivatives. This Corynebacterium urealyticum (strain ATCC 43042 / DSM 7109) protein is Lipoyl synthase.